Here is a 286-residue protein sequence, read N- to C-terminus: Prohibitin-2, mitochondrial (286 aa).

Topologically, residues 1–13 (MSFNKVPNIPGAP) are mitochondrial matrix. Residues 14–32 (ALSALLKVSVIGGLGVYAL) form a helical; Signal-anchor for type II membrane protein membrane-spanning segment. Residues 33-286 (TNSLYNVDGG…LQEMNLEPKK (254 aa)) lie on the Mitochondrial intermembrane side of the membrane. Residues 186–219 (KEFTAAIEAKQVAAQEAERAKFIVEKAEQDRRSA) are a coiled coil.

Belongs to the prohibitin family. Component of a prohibitin multimeric complex in mitochondrial membranes. In terms of tissue distribution, mostly expressed in proliferative tissues, including vasculature, shoot and root apical tissues.

The protein localises to the mitochondrion inner membrane. In terms of biological role, prohibitin probably acts as a holdase/unfoldase for the stabilization of newly synthesized mitochondrial proteins. The polypeptide is Prohibitin-2, mitochondrial (PHB2) (Arabidopsis thaliana (Mouse-ear cress)).